Consider the following 547-residue polypeptide: Probable hydroxyacid-oxoacid transhydrogenase, mitochondrial (547 aa).

The protein belongs to the iron-containing alcohol dehydrogenase family. Hydroxyacid-oxoacid transhydrogenase subfamily.

Its subcellular location is the mitochondrion. It carries out the reaction (S)-3-hydroxybutanoate + 2-oxoglutarate = (R)-2-hydroxyglutarate + acetoacetate. It catalyses the reaction 4-hydroxybutanoate + 2-oxoglutarate = (R)-2-hydroxyglutarate + succinate semialdehyde. Its function is as follows. Catalyzes the cofactor-independent reversible oxidation of gamma-hydroxybutyrate (GHB) to succinic semialdehyde (SSA) coupled to reduction of 2-ketoglutarate (2-KG) to D-2-hydroxyglutarate (D-2-HG). L-3-hydroxybutyrate (L-3-OHB) is also a substrate for HOT when using 2-KG as hydrogen acceptor, resulting in the formation of D-2-HG. The polypeptide is Probable hydroxyacid-oxoacid transhydrogenase, mitochondrial (adhfe1) (Dictyostelium discoideum (Social amoeba)).